The following is a 212-amino-acid chain: ER lumen protein-retaining receptor 2 (212 aa).

Residues 1–4 (MNIF) lie on the Lumenal side of the membrane. Residues 5-24 (RLTGDLSHLAAIIILLLKIW) form a helical membrane-spanning segment. Topologically, residues 25–32 (KSRSCAGI) are cytoplasmic. A helical transmembrane segment spans residues 33–52 (SGKSQILFALVFTTRYLDLL). Residues 47–48 (RY) are interaction with the K-D-E-L motif on target proteins. Residues 53–58 (TSFISL) are Lumenal-facing. The helical transmembrane segment at 59 to 79 (YNTCMKVIYIGCAYATVYLIY) threads the bilayer. Topologically, residues 80-92 (AKFRATYDGNHDT) are cytoplasmic. Residues 93 to 110 (FRAEFLVVPVGGLAFLVN) form a helical membrane-spanning segment. At 111–116 (HDFSPL) the chain is on the lumenal side. Residues 117–135 (EILWTFSIYLESVAILPQL) form a helical membrane-spanning segment. The Cytoplasmic portion of the chain corresponds to 136–149 (FMISKTGEAETITT). A helical membrane pass occupies residues 150–168 (HYLFCLGVYRALYLFNWIW). The segment at 159–169 (RALYLFNWIWR) is interaction with the K-D-E-L motif on target proteins. At 169–178 (RFYFEGFFDM) the chain is on the lumenal side. The helical transmembrane segment at 179–199 (IAIVAGVVQTILYCDFFYLYV) threads the bilayer. Topologically, residues 200–212 (TKVLKGKKLSLPA) are cytoplasmic. The important for recycling of cargo proteins with the sequence motif K-D-E-L from the Golgi to the endoplasmic reticulum stretch occupies residues 204–207 (KGKK).

It belongs to the ERD2 family.

The protein resides in the endoplasmic reticulum membrane. It is found in the golgi apparatus membrane. It localises to the cytoplasmic vesicle. The protein localises to the COPI-coated vesicle membrane. Its function is as follows. Receptor for the C-terminal sequence motif K-D-E-L that is present on endoplasmic reticulum resident proteins and that mediates their recycling from the Golgi back to the endoplasmic reticulum. Binding is pH dependent, and is optimal at pH 5-5.4. This chain is ER lumen protein-retaining receptor 2 (kdelr2), found in Danio rerio (Zebrafish).